A 324-amino-acid polypeptide reads, in one-letter code: Glyoxylate/hydroxypyruvate reductase B (324 aa).

Active-site residues include R237 and E266. H285 functions as the Proton donor in the catalytic mechanism.

Belongs to the D-isomer specific 2-hydroxyacid dehydrogenase family. GhrB subfamily. Homodimer.

Its subcellular location is the cytoplasm. The catalysed reaction is glycolate + NADP(+) = glyoxylate + NADPH + H(+). It catalyses the reaction (R)-glycerate + NAD(+) = 3-hydroxypyruvate + NADH + H(+). The enzyme catalyses (R)-glycerate + NADP(+) = 3-hydroxypyruvate + NADPH + H(+). In terms of biological role, catalyzes the NADPH-dependent reduction of glyoxylate and hydroxypyruvate into glycolate and glycerate, respectively. This Salmonella agona (strain SL483) protein is Glyoxylate/hydroxypyruvate reductase B.